Consider the following 673-residue polypeptide: DNA ligase (673 aa).

NAD(+) is bound by residues D33–D37, S82–L83, and E115. The active-site N6-AMP-lysine intermediate is the K117. Positions 138, 175, 292, and 316 each coordinate NAD(+). Residues C410, C413, C428, and C434 each contribute to the Zn(2+) site. A BRCT domain is found at V593–L673.

This sequence belongs to the NAD-dependent DNA ligase family. LigA subfamily. Mg(2+) is required as a cofactor. Mn(2+) serves as cofactor.

The catalysed reaction is NAD(+) + (deoxyribonucleotide)n-3'-hydroxyl + 5'-phospho-(deoxyribonucleotide)m = (deoxyribonucleotide)n+m + AMP + beta-nicotinamide D-nucleotide.. Functionally, DNA ligase that catalyzes the formation of phosphodiester linkages between 5'-phosphoryl and 3'-hydroxyl groups in double-stranded DNA using NAD as a coenzyme and as the energy source for the reaction. It is essential for DNA replication and repair of damaged DNA. The chain is DNA ligase from Pasteurella multocida (strain Pm70).